The chain runs to 1048 residues: MVLINDKKFACEKCIKGHRVSACTHTDRPLFEVKKKGRPSTQCRHCKEKRKSAGSSVHTKCQCGATDPKTLKDILASVNAAHAAANESGGASATANTSAEPEIETRKGQPGSKPTFPRGLKDVHEIAAAANALQGWGEDDQVVKAAERTVQALLNPCKCELGGPCTCCQIKTKPRRKHSGHEFENPASAGATPPGGGCCGSSVHSRDDVATRNSPTSINSSEAIHHPPQTAPMLHKTRLFSPYSTDLRRRDSSSSTGSKTPGWASPRAMRPPVSRIKPLTDMRRLMNAAVNQDGTLASEIPRSVVGLPTLPGIESFNTSANLENGEKSKDVDMPLAFPTSEDVVIGACMCGDDCSCPGCATHDHHNISPSNRTHDGSCGESCKGHNDCAHSIPIPSGVQSIAQLICIAASQVPPPPPNRTDSLNPHDTRILPPSVSLSEDVARTMGIVPLKPLECCGGKCGCPPGECACTKQCCGCCGECTCEKDEDTRMEEEGEYTESARDVTTSSCGGCKGKEKQSGFSDMMSPQIPQSVSPTSYHVPPLQPKPLNLPVSTIHHSTLSPSFNTPQPSPPAVSSPADSLSMAVHPSNGPNVRPVPMIQPRPILPKRASDTGLVMPQGSRPPSALGRSGSMTATKRSGTSTGVRRSNSDVRKVVGPSQPHHRPSIQSSSDRSFYIGSPSNQIAPGGVPMASAPSQMTAPLNSADSNSDLLAFIQQQWSADKTSNSNSDMNPSHPTMPVSLTAEPWAFPPQNETTDDSAPVPFDLDAFLMSIGVQPDGELRNDRPLSSQPPQSLMPNIPPTQPIAPLPPIPPSMSDVRPGYDMTFANFFLNSTPSGPSGPSAIPATNIPSRHTTPQASRPLTPPESSFTEPPRWKFPGDLGGEIPIWNGPEALEGFGVLGSPVSEKEEVTEESQNEKDIIDLSKPLDSAALTKIMKALEKQGGGQSSSQGAPSVANTDQQLQSLPALQTVPPVHPASVISPTRADPAHELDDMFSQFVTLDGTPIGSNNDGLGLNGGPGMMALPTNLSLGDELGFGGEMRWDQARMWSN.

Positions Met1–Ser40 form a DNA-binding region, copper-fist. The Zn(2+) site is built by Cys11, Cys14, Cys23, and His25. Low complexity predominate over residues Ala85–Ala99. Disordered regions lie at residues Ala85–Pro117 and His178–Val273. Polar residues predominate over residues Thr211–Glu222. A CRM-I motif is present at residues Cys348–His362. Residues Cys455–Cys482 carry the CRM-II motif. Disordered stretches follow at residues Ser506–Ser702 and Gly835–Pro876. Composition is skewed to polar residues over residues Gln527 to Ser536, Pro550 to Thr565, Gly629 to Arg645, Ser664 to Ile682, and Ala692 to Ser702. The segment covering Gly835–Thr845 has biased composition (low complexity). The segment covering Asn846 to Thr868 has biased composition (polar residues).

The protein localises to the nucleus. It is found in the cytoplasm. The protein resides in the cell cortex. Its function is as follows. Transcription factor that regulates copper acquisition and homeostasis, and which plays a central role in fungal pathogenesis during neurologic infection. The transcriptional regulation exerted by CUF1 is intrinsically complex since it acts as a dual sensor of copper levels, responsible for expression of a set of copper-specific copper transporters, CTR1 and CTR4, at low copper concentrations, and 2 metallothioneins, CMT1 and CMT2, at high copper concentrations. Positively regulates the expression of the copper acquisition factor BIM1 under copper-limiting conditions. Also positively regulates the expression of super oxide dismutase SOD2 isoform 2 during oxidative stress and copper-limiting conditions. Negatively regulates the expression of super oxide dismutase SOD1 during copper-limiting conditions. Also regulates ATM1, an ABC transporter with functions in the iron-sulfur clusters (ISC) export machinery, during copper stress. Another target of CUF1 is the gene encoding the laccase LAC1. Binds promoters of target genes at Cu-responsive elements (CuREs) that contain a variable A/T rich 5' region followed by the core consensus sequence 5'-G(G/C)CTC(A/G)-3'. Negatively regulates capsule biosynthesis, probably via modulating iron acquisition through the high-affinity iron uptake pathway. The protein is Copper-dependent transcription factor 1 of Cryptococcus neoformans var. grubii serotype A (strain H99 / ATCC 208821 / CBS 10515 / FGSC 9487) (Filobasidiella neoformans var. grubii).